A 312-amino-acid polypeptide reads, in one-letter code: Porphobilinogen deaminase (312 aa).

Cys-241 carries the post-translational modification S-(dipyrrolylmethanemethyl)cysteine.

This sequence belongs to the HMBS family. In terms of assembly, monomer. Dipyrromethane is required as a cofactor.

It catalyses the reaction 4 porphobilinogen + H2O = hydroxymethylbilane + 4 NH4(+). Its pathway is porphyrin-containing compound metabolism; protoporphyrin-IX biosynthesis; coproporphyrinogen-III from 5-aminolevulinate: step 2/4. The protein operates within porphyrin-containing compound metabolism; chlorophyll biosynthesis. Its function is as follows. Tetrapolymerization of the monopyrrole PBG into the hydroxymethylbilane pre-uroporphyrinogen in several discrete steps. This chain is Porphobilinogen deaminase, found in Chlorobaculum tepidum (strain ATCC 49652 / DSM 12025 / NBRC 103806 / TLS) (Chlorobium tepidum).